Consider the following 209-residue polypeptide: MMFPSRPMLCVITDEELPPVTFARQALWGGATILQLRNKTASGRDLCRWSEAILPLTRQHNALFIVNDRLDIALATGADGVHLGQDDLPATVARKLLGPDRIIGVSTGTREEALQAEKEGADYVGFGHIFPTGSKDKPLPPVGTLALQDTASLLSIPLIAIGGIQLENARRVISCGASGIAVISAVSRHPDPRIAAEALVREMEEGMLL.

4-amino-2-methyl-5-(diphosphooxymethyl)pyrimidine-binding positions include 35-39 and Asn67; that span reads QLRNK. Mg(2+) is bound by residues Asp68 and Asp87. Ser106 serves as a coordination point for 4-amino-2-methyl-5-(diphosphooxymethyl)pyrimidine. Position 132-134 (132-134) interacts with 2-[(2R,5Z)-2-carboxy-4-methylthiazol-5(2H)-ylidene]ethyl phosphate; that stretch reads TGS. Residue Lys135 coordinates 4-amino-2-methyl-5-(diphosphooxymethyl)pyrimidine. 2-[(2R,5Z)-2-carboxy-4-methylthiazol-5(2H)-ylidene]ethyl phosphate-binding positions include Gly163 and 183-184; that span reads IS.

This sequence belongs to the thiamine-phosphate synthase family. Requires Mg(2+) as cofactor.

The enzyme catalyses 2-[(2R,5Z)-2-carboxy-4-methylthiazol-5(2H)-ylidene]ethyl phosphate + 4-amino-2-methyl-5-(diphosphooxymethyl)pyrimidine + 2 H(+) = thiamine phosphate + CO2 + diphosphate. It catalyses the reaction 2-(2-carboxy-4-methylthiazol-5-yl)ethyl phosphate + 4-amino-2-methyl-5-(diphosphooxymethyl)pyrimidine + 2 H(+) = thiamine phosphate + CO2 + diphosphate. It carries out the reaction 4-methyl-5-(2-phosphooxyethyl)-thiazole + 4-amino-2-methyl-5-(diphosphooxymethyl)pyrimidine + H(+) = thiamine phosphate + diphosphate. It functions in the pathway cofactor biosynthesis; thiamine diphosphate biosynthesis; thiamine phosphate from 4-amino-2-methyl-5-diphosphomethylpyrimidine and 4-methyl-5-(2-phosphoethyl)-thiazole: step 1/1. Condenses 4-methyl-5-(beta-hydroxyethyl)thiazole monophosphate (THZ-P) and 2-methyl-4-amino-5-hydroxymethyl pyrimidine pyrophosphate (HMP-PP) to form thiamine monophosphate (TMP). This chain is Thiamine-phosphate synthase, found in Chlorobium phaeovibrioides (strain DSM 265 / 1930) (Prosthecochloris vibrioformis (strain DSM 265)).